Reading from the N-terminus, the 434-residue chain is 5'-deoxyadenosine deaminase (434 aa).

Zn(2+) contacts are provided by His63 and His65. Substrate-binding residues include Glu92 and His184. Residue His211 participates in Zn(2+) binding. Glu214 and Asp299 together coordinate substrate. Asp299 lines the Zn(2+) pocket.

Belongs to the metallo-dependent hydrolases superfamily. MTA/SAH deaminase family. Homotetramer. Requires Zn(2+) as cofactor.

The catalysed reaction is 5'-deoxyadenosine + H2O + H(+) = 5'-deoxyinosine + NH4(+). It carries out the reaction S-adenosyl-L-homocysteine + H2O + H(+) = S-inosyl-L-homocysteine + NH4(+). It catalyses the reaction S-methyl-5'-thioadenosine + H2O + H(+) = S-methyl-5'-thioinosine + NH4(+). The enzyme catalyses adenosine + H2O + H(+) = inosine + NH4(+). It participates in amino-acid biosynthesis; S-adenosyl-L-methionine biosynthesis. In terms of biological role, catalyzes the deamination of three SAM-derived enzymatic products, namely 5'-deoxyadenosine, S-adenosyl-L-homocysteine, and 5'-methylthioadenosine, to produce the inosine analogs. Can also deaminate adenosine. The preferred substrate for this enzyme is 5'-deoxyadenosine, but all these substrates are efficiently deaminated. Likely functions in a S-adenosyl-L-methionine (SAM) recycling pathway from S-adenosyl-L-homocysteine (SAH) produced from SAM-dependent methylation reactions. May also be involved in the recycling of 5'-deoxyadenosine, whereupon the 5'-deoxyribose moiety of 5'-deoxyinosine is further metabolized to deoxyhexoses used for the biosynthesis of aromatic amino acids in methanogens. This is 5'-deoxyadenosine deaminase from Methanococcoides burtonii (strain DSM 6242 / NBRC 107633 / OCM 468 / ACE-M).